Reading from the N-terminus, the 505-residue chain is Exoglucanase 1 (505 aa).

The N-terminal stretch at 1–17 is a signal peptide; the sequence is MYRKLAVISAFLAAARA. At Gln18 the chain carries Pyrrolidone carboxylic acid. Positions 18 to 449 are catalytic; it reads QQVCTQQAET…GSTGGNTGSN (432 aa). 4 disulfide bridges follow: Cys21–Cys88, Cys36–Cys41, Cys66–Cys87, and Cys77–Cys83. N-linked (GlcNAc...) asparagine glycosylation is found at Asn93 and Asn126. 6 disulfide bridges follow: Cys151/Cys410, Cys185/Cys223, Cys189/Cys222, Cys243/Cys269, Cys251/Cys256, and Cys274/Cys344. The Nucleophile role is filled by Glu225. Glu230 serves as the catalytic Proton donor/acceptor. Asn283 and Asn397 each carry an N-linked (GlcNAc...) asparagine glycan. 2 disordered regions span residues 399–423 and 440–472; these read TAST…VEAQ and GSTG…ATQT. The segment covering 409-423 has biased composition (polar residues); that stretch reads SCSTSSGVPAQVEAQ. The segment covering 447-470 has biased composition (low complexity); it reads GSNPPGTSTTRAPPSSTGSSPTAT. Positions 450 to 468 are linker; the sequence is PPGTSTTRAPPSSTGSSPT. The 37-residue stretch at 469–505 folds into the CBM1 domain; sequence ATQTHYGQCGGTGWTGPTRCASGYTCQVLNPFYSQCL.

The protein belongs to the glycosyl hydrolase 7 (cellulase C) family. Post-translationally, O-glycosylated. O-glycosylation of the cellulase linker provides protection from proteolysis. Linker glycans also contribute to binding affinity of cellobiohydrolases to cellulose.

The protein localises to the secreted. It carries out the reaction Hydrolysis of (1-&gt;4)-beta-D-glucosidic linkages in cellulose and cellotetraose, releasing cellobiose from the non-reducing ends of the chains.. Its function is as follows. Exocellobiohydrolases (CBH) that catalyzes the hydrolysis of 1,4-beta-D-glucosidic bonds in cellulose to release the disaccharide cellobiose. The degradation of cellulose involves an interplay between different cellulolytic enzymes. Hydrolysis starts with endoglucanases (EGs), which cut internal beta-1,4-glucosidic bonds in cellulose to reduce the polymerization degree of the substrate and create new chain ends for exocellobiohydrolases (CBHs). The CBHs release the disaccharide cellobiose from the non-reducing end of the cellulose polymer chain. Finally, beta-1,4-glucosidases hydrolyze the cellobiose and other short cello-oligosaccharides into glucose units. In Trichoderma harzianum (Hypocrea lixii), this protein is Exoglucanase 1 (cbh1).